The sequence spans 109 residues: Nucleoid-associated protein HAPS_1040 (109 aa).

Positions 1–21 (MFGKGGLGGLMKQAQQMQERM) are disordered. Residues 10 to 19 (LMKQAQQMQE) are compositionally biased toward low complexity.

It belongs to the YbaB/EbfC family. As to quaternary structure, homodimer.

It is found in the cytoplasm. Its subcellular location is the nucleoid. Functionally, binds to DNA and alters its conformation. May be involved in regulation of gene expression, nucleoid organization and DNA protection. The sequence is that of Nucleoid-associated protein HAPS_1040 from Glaesserella parasuis serovar 5 (strain SH0165) (Haemophilus parasuis).